Reading from the N-terminus, the 270-residue chain is Thiosulfate dehydrogenase (270 aa).

The first 27 residues, 1–27 (MRGDVRVHTASPIAAAWLLAVGLVAHA), serve as a signal peptide directing secretion. Cytochrome c domains follow at residues 44–158 (PDGA…PVGA) and 174–260 (PDGV…LTHP). Heme c-binding residues include Cys76, Cys79, His80, Cys187, Cys190, and His191.

Monomer. In terms of processing, binds 2 heme c groups covalently per subunit.

The protein resides in the periplasm. It carries out the reaction 2 thiosulfate + 2 Fe(III)-[cytochrome c] = tetrathionate + 2 Fe(II)-[cytochrome c] + 2 H(+). Its function is as follows. Catalyzes the oxidation of 2 molecules of thiosulfate to tetrathionate. In Allochromatium vinosum (strain ATCC 17899 / DSM 180 / NBRC 103801 / NCIMB 10441 / D) (Chromatium vinosum), this protein is Thiosulfate dehydrogenase (tsdA).